A 777-amino-acid polypeptide reads, in one-letter code: Zinc finger FYVE domain-containing protein 1 (777 aa).

Positions 416–777 (MAHSSFFPDE…FNCNKKPGDL (362 aa)) are required for localization in the lipid droplets. 2 FYVE-type zinc fingers span residues 598–659 (NSQI…EARN) and 715–775 (DHEI…KKPG). Cysteine 604, cysteine 607, cysteine 620, cysteine 623, cysteine 628, cysteine 631, cysteine 651, cysteine 654, cysteine 721, cysteine 724, cysteine 737, cysteine 740, cysteine 745, cysteine 748, cysteine 767, and cysteine 770 together coordinate Zn(2+).

As to quaternary structure, interacts with RAB18 (in GTP-bound form). Interacts with BSCL2 in a RAB18-dependent manner. Interacts with ZW10. (Microbial infection) Interacts with SARS coronavirus-2/SARS-CoV-2 non-structural protein 6 (nsp6); the interaction is independent of PtdIns3P-binding and leads to endoplasmic reticulum (ER) and double membrane vesicles (DMVs) binding to lipid droplets. In terms of tissue distribution, highly expressed in heart. Also detected in the testis. Expressed in all tissues examined, including, brain, placenta, lung, liver, skeletal muscle, pancreas and kidney. Highly expressed in heart.

It is found in the golgi apparatus. The protein resides in the golgi stack. Its subcellular location is the endoplasmic reticulum. It localises to the lipid droplet. The protein localises to the preautophagosomal structure. It is found in the mitochondrion. Its function is as follows. Plays a role in the formation of lipid droplets (LDs) which are storage organelles at the center of lipid and energy homeostasis. Regulates the morphology, size and distribution of LDs. Mediates the formation of endoplasmic reticulum-lipid droplets (ER-LD) contacts by forming a complex with RAB18 and ZW10. Binds to phosphatidylinositol 3-phosphate (PtdIns3P) through FYVE-type zinc finger. In terms of biological role, (Microbial infection) Upon SARS coronavirus-2/SARS-CoV-2 infection, mediates through binding with non-structural protein 6 (nsp6) the replication organelle-lipid droplet association required to sustain viral replication. This chain is Zinc finger FYVE domain-containing protein 1 (ZFYVE1), found in Homo sapiens (Human).